Consider the following 109-residue polypeptide: Thiosulfate sulfurtransferase GlpE (109 aa).

The region spanning 17-105 is the Rhodanese domain; sequence KEGKTALVDI…WARSYPQDIT (89 aa). Cys-65 serves as the catalytic Cysteine persulfide intermediate.

It belongs to the GlpE family.

Its subcellular location is the cytoplasm. It carries out the reaction thiosulfate + hydrogen cyanide = thiocyanate + sulfite + 2 H(+). It catalyses the reaction thiosulfate + [thioredoxin]-dithiol = [thioredoxin]-disulfide + hydrogen sulfide + sulfite + 2 H(+). In terms of biological role, transferase that catalyzes the transfer of sulfur from thiosulfate to thiophilic acceptors such as cyanide or dithiols. May function in a CysM-independent thiosulfate assimilation pathway by catalyzing the conversion of thiosulfate to sulfite, which can then be used for L-cysteine biosynthesis. The protein is Thiosulfate sulfurtransferase GlpE of Yersinia pestis.